A 134-amino-acid polypeptide reads, in one-letter code: Small ribosomal subunit protein bS16 (134 aa).

The segment at 81–134 is disordered; it reads LAKRPARSNPKKAEPGKKAQERLAAARQAEEEAKAAAEAAAAAPAEAPAEEAAS. A compositionally biased stretch (basic and acidic residues) spans 91–101; that stretch reads KKAEPGKKAQE. Residues 116 to 134 show a composition bias toward low complexity; it reads AAEAAAAAPAEAPAEEAAS.

It belongs to the bacterial ribosomal protein bS16 family.

The chain is Small ribosomal subunit protein bS16 from Chelativorans sp. (strain BNC1).